A 222-amino-acid chain; its full sequence is Collectrin (222 aa).

The signal sequence occupies residues 1-14; that stretch reads MLWALFFLVTTIHA. Over 15 to 141 the chain is Extracellular; that stretch reads ELCHPDAENA…LAPPMEPSVP (127 aa). The region spanning 21-222 is the Collectrin-like domain; that stretch reads AENAFKVRLS…LTEDERLTPL (202 aa). 2 N-linked (GlcNAc...) asparagine glycosylation sites follow: N76 and N93. The chain crosses the membrane as a helical span at residues 142–162; the sequence is VWIIVFGVIFCIVTVAIALLV. Residues 163-222 lie on the Cytoplasmic side of the membrane; the sequence is LSGIRQRRRNNKGPPGVEDAEDKCENIITIENGIPCDPLDMKGGHINDGFLTEDERLTPL. Phosphothreonine occurs at positions 214 and 220.

This sequence belongs to the CLTRN family. In terms of assembly, monomer. Homodimer. Homodimer; dimerization prevents CLTRN cleavage by BACE2. Interacts with SNAPIN. Interacts with SLC6A18; this interaction regulates the trafficking of SLC6A18 to the cell membrane and its amino acid transporter activity. Interacts with SLC6A19; this interaction regulates the trafficking of SLC6A19 to the cell membrane and its amino acid transporter activity. Interacts with SLC6A20B. In terms of processing, glycosylated. Glycosylation is required for plasma membrane localization and for its cleavage by BACE2. Post-translationally, proteolytically processed in pancreatic beta cells by BACE2 leading to the generation and extracellular release of soluble CLTRN, and a corresponding cell-associated C-terminal fragment which is later cleaved by gamma-secretase. This shedding process inactivates CLTRN. Three cleavage sites have been identified for BACE2, two clustered sites after Phe-116 and Leu-118 and a more membrane proximal site at Phe-125; the preferred BACE2 cleavage site seems to be between Phe-125 and Leu-126, Phe-116 and Leu-118 act as alternative sites. Expressed on the apical surface of the proximal tubules in the renal cortex (at protein level). Kidney; collecting ducts and proximal tubule. Pancreas; beta cells of islets. Expressed in the cerebral cortex, hippocampus, brainstem and cerebellum.

It is found in the cell membrane. Functionally, plays an important role in amino acid transport by acting as binding partner of amino acid transporters SLC6A18 and SLC6A19, regulating their trafficking on the cell surface and their activity. May also play a role in trafficking of amino acid transporters SLC3A1 and SLC7A9 to the renal cortical cell membrane. Regulator of SNARE complex function. Stimulator of beta cell replication. This chain is Collectrin, found in Mus musculus (Mouse).